Reading from the N-terminus, the 402-residue chain is 1-deoxy-D-xylulose 5-phosphate reductoisomerase (402 aa).

NADPH contacts are provided by Thr-10, Gly-11, Ser-12, Ile-13, Gly-36, Arg-37, Asn-38, and Asn-124. Lys-125 contributes to the 1-deoxy-D-xylulose 5-phosphate binding site. Glu-126 provides a ligand contact to NADPH. Asp-150 is a Mn(2+) binding site. Positions 151, 152, 186, and 209 each coordinate 1-deoxy-D-xylulose 5-phosphate. Glu-152 is a Mn(2+) binding site. Gly-215 serves as a coordination point for NADPH. The 1-deoxy-D-xylulose 5-phosphate site is built by Ser-222, Asn-227, Lys-228, and Glu-231. Glu-231 is a binding site for Mn(2+).

The protein belongs to the DXR family. The cofactor is Mg(2+). It depends on Mn(2+) as a cofactor.

The enzyme catalyses 2-C-methyl-D-erythritol 4-phosphate + NADP(+) = 1-deoxy-D-xylulose 5-phosphate + NADPH + H(+). It participates in isoprenoid biosynthesis; isopentenyl diphosphate biosynthesis via DXP pathway; isopentenyl diphosphate from 1-deoxy-D-xylulose 5-phosphate: step 1/6. With respect to regulation, inhibited by fosmidomycin. Its function is as follows. Catalyzes the NADPH-dependent rearrangement and reduction of 1-deoxy-D-xylulose-5-phosphate (DXP) to 2-C-methyl-D-erythritol 4-phosphate (MEP). This is 1-deoxy-D-xylulose 5-phosphate reductoisomerase from Synechococcus sp. (strain ATCC 27144 / PCC 6301 / SAUG 1402/1) (Anacystis nidulans).